The sequence spans 295 residues: Small ribosomal subunit protein uS2 (295 aa).

The interval 264–295 is disordered; that stretch reads KFSKTKNIDEETNTEFEQALNDTDENKNADNA.

Belongs to the universal ribosomal protein uS2 family.

This chain is Small ribosomal subunit protein uS2, found in Rickettsia akari (strain Hartford).